The following is a 584-amino-acid chain: Membrane frizzled-related protein (584 aa).

Over 1–69 (MKDYDDVILR…QPDCHFSWFC (69 aa)) the chain is Cytoplasmic. The helical; Signal-anchor for type II membrane protein transmembrane segment at 70–90 (ILLLSGLLLLLLGLLVAVILA) threads the bilayer. The Extracellular segment spans residues 91 to 584 (QLQATSLPRT…AASLEACSQP (494 aa)). The tract at residues 108 to 140 (RGLTPMGVIPSTTPNTTTTTTTTTPARTGQQEA) is disordered. The span at 119 to 132 (TTPNTTTTTTTTTP) shows a compositional bias: low complexity. Cystine bridges form between Cys-150-Cys-176 and Cys-203-Cys-222. A CUB 1 domain is found at 150–259 (CGGLLPGPSG…SGFQAWYQAV (110 aa)). N-linked (GlcNAc...) asparagine glycosylation is present at Asn-233. The LDL-receptor class A 1 domain occupies 265–301 (SCAHNEFHCDLLLCLKRDSVCDGITECADGSDEANCS). 5 disulfides stabilise this stretch: Cys-266–Cys-278, Cys-273–Cys-291, Cys-285–Cys-300, Cys-307–Cys-333, and Cys-360–Cys-383. The region spanning 307-420 (CGGNLTGLYG…GGFLATYQAI (114 aa)) is the CUB 2 domain. An N-linked (GlcNAc...) asparagine glycan is attached at Asn-421. Positions 426-460 (GCPWAEFCQSGGYRDLQWMCDLWKDCANDSNDNCS) constitute an LDL-receptor class A 2 domain. 7 disulfides stabilise this stretch: Cys-433–Cys-451, Cys-445–Cys-459, Cys-471–Cys-533, Cys-479–Cys-526, Cys-517–Cys-554, Cys-543–Cys-581, and Cys-547–Cys-569. Asn-458 carries an N-linked (GlcNAc...) asparagine glycan. One can recognise an FZ domain in the interval 466–584 (QPDLTCEPVQ…AASLEACSQP (119 aa)).

Interacts with C1QTNF5. As to expression, expressed in retinal pigment epithelium and ciliary epithelium of the eye.

Its subcellular location is the apical cell membrane. Functionally, may play a role in eye development. The protein is Membrane frizzled-related protein (Mfrp) of Mus musculus (Mouse).